The primary structure comprises 93 residues: Integration host factor subunit beta (93 aa).

Belongs to the bacterial histone-like protein family. Heterodimer of an alpha and a beta chain.

This protein is one of the two subunits of integration host factor, a specific DNA-binding protein that functions in genetic recombination as well as in transcriptional and translational control. This Haemophilus ducreyi (strain 35000HP / ATCC 700724) protein is Integration host factor subunit beta.